The following is a 321-amino-acid chain: High osmolarity signaling protein SHO1A (321 aa).

Over 1–28 the chain is Cytoplasmic; that stretch reads MDYNNNRYGGGGGGSKFNLGHIVGDPFS. Residues 29-49 traverse the membrane as a helical segment; that stretch reads LATIAIATAGWLIAFVSSIIA. Over 50-58 the chain is Extracellular; the sequence is NIDQEYPNY. N-linked (GlcNAc...) asparagine glycosylation occurs at N57. Residues 59 to 79 form a helical membrane-spanning segment; it reads SWWALAYMFFVILGVTFAVAA. Residue N80 is a topological domain, cytoplasmic. A helical membrane pass occupies residues 81–101; it reads AVYTYHVAMVGFLAAGLVFTT. Residues 102–116 lie on the Extracellular side of the membrane; that stretch reads SSVNSLIYWSDKAKQ. A helical membrane pass occupies residues 117–137; sequence AAAAGFILLSMVSIVWIFYFG. At 138–321 the chain is on the cytoplasmic side; the sequence is SQPTASHRQT…IAPSNYLILL (184 aa). 2 disordered regions span residues 155-181 and 194-261; these read KDHA…AQHP and TSSP…QQPT. Composition is skewed to polar residues over residues 165–181 and 225–237; these read HMTQ…AQHP and NFSN…PITS. A compositionally biased stretch (low complexity) spans 238–249; the sequence is QNNPQNQHQQPQ. Polar residues predominate over residues 250-261; the sequence is DLTSPSTTQQPT. An SH3 domain is found at 262–321; it reads EYPYRAKAIYSYEANPDDANEISFNKHEILEVSDVSGRWWQAKKENGETGIAPSNYLILL.

This sequence belongs to the SHO1 family. As to quaternary structure, forms homooligomers.

It localises to the cell membrane. Its function is as follows. Plasma membrane osmosensor that activates the high osmolarity glycerol (HOG) MAPK signaling pathway in response to high osmolarity. In Hortaea werneckii, this protein is High osmolarity signaling protein SHO1A (SHO1A).